The chain runs to 181 residues: dCTP deaminase (181 aa).

Residues 100-105 (RSTFAR) and D116 each bind dCTP. The active-site Proton donor/acceptor is E126. Residues Y158 and Q165 each coordinate dCTP. The segment at 160 to 181 (GKYQGQRGVTPPKLDNSSSKNF) is disordered.

This sequence belongs to the dCTP deaminase family. In terms of assembly, homotrimer.

It carries out the reaction dCTP + H2O + H(+) = dUTP + NH4(+). Its pathway is pyrimidine metabolism; dUMP biosynthesis; dUMP from dCTP (dUTP route): step 1/2. In terms of biological role, catalyzes the deamination of dCTP to dUTP. In Desulfurococcus amylolyticus (strain DSM 18924 / JCM 16383 / VKM B-2413 / 1221n) (Desulfurococcus kamchatkensis), this protein is dCTP deaminase.